Here is a 156-residue protein sequence, read N- to C-terminus: ATP synthase subunit b (156 aa).

The helical transmembrane segment at 7–26 (FIGQMVAFAIFIYLTYRYVW) threads the bilayer.

The protein belongs to the ATPase B chain family. As to quaternary structure, F-type ATPases have 2 components, F(1) - the catalytic core - and F(0) - the membrane proton channel. F(1) has five subunits: alpha(3), beta(3), gamma(1), delta(1), epsilon(1). F(0) has three main subunits: a(1), b(2) and c(10-14). The alpha and beta chains form an alternating ring which encloses part of the gamma chain. F(1) is attached to F(0) by a central stalk formed by the gamma and epsilon chains, while a peripheral stalk is formed by the delta and b chains.

It is found in the cell inner membrane. Its function is as follows. F(1)F(0) ATP synthase produces ATP from ADP in the presence of a proton or sodium gradient. F-type ATPases consist of two structural domains, F(1) containing the extramembraneous catalytic core and F(0) containing the membrane proton channel, linked together by a central stalk and a peripheral stalk. During catalysis, ATP synthesis in the catalytic domain of F(1) is coupled via a rotary mechanism of the central stalk subunits to proton translocation. Functionally, component of the F(0) channel, it forms part of the peripheral stalk, linking F(1) to F(0). This chain is ATP synthase subunit b, found in Cellvibrio japonicus (strain Ueda107) (Pseudomonas fluorescens subsp. cellulosa).